The chain runs to 330 residues: DNA-directed RNA polymerase subunit alpha (330 aa).

An alpha N-terminal domain (alpha-NTD) region spans residues 1-236 (MQGSVTEFLK…EQLDAFVDLR (236 aa)). Residues 250–330 (FDPILLRPVD…NWPPASIAED (81 aa)) are alpha C-terminal domain (alpha-CTD).

Belongs to the RNA polymerase alpha chain family. In terms of assembly, homodimer. The RNAP catalytic core consists of 2 alpha, 1 beta, 1 beta' and 1 omega subunit. When a sigma factor is associated with the core the holoenzyme is formed, which can initiate transcription.

It catalyses the reaction RNA(n) + a ribonucleoside 5'-triphosphate = RNA(n+1) + diphosphate. In terms of biological role, DNA-dependent RNA polymerase catalyzes the transcription of DNA into RNA using the four ribonucleoside triphosphates as substrates. The sequence is that of DNA-directed RNA polymerase subunit alpha from Vibrio cholerae serotype O1 (strain ATCC 39315 / El Tor Inaba N16961).